We begin with the raw amino-acid sequence, 693 residues long: Golgin subfamily A member 6B (693 aa).

Residues 1–11 are compositionally biased toward pro residues; the sequence is MWPQPYLPPHP. Disordered regions lie at residues 1 to 72, 497 to 551, 629 to 650, and 660 to 679; these read MWPQ…SQYQ, LPGE…VERR, NPADEPTPGAPAPQELGAAGEQ, and NNVEPAPGAAREGSPHDNPT. Residues 77 to 611 are a coiled coil; it reads ALESSSVTIS…KLLELQELVL (535 aa). Positions 537–551 are enriched in basic and acidic residues; that stretch reads LPKEKADGTEQVERR.

This sequence belongs to the GOLGA6 family.

In Homo sapiens (Human), this protein is Golgin subfamily A member 6B (GOLGA6B).